Reading from the N-terminus, the 673-residue chain is DNA ligase (673 aa).

NAD(+)-binding positions include 35-39, 84-85, and Glu-115; these read DAEYD and SL. Residue Lys-117 is the N6-AMP-lysine intermediate of the active site. NAD(+) contacts are provided by Arg-138, Glu-175, Lys-292, and Lys-316. Zn(2+) is bound by residues Cys-410, Cys-413, Cys-428, and Cys-434. Residues 592–673 enclose the BRCT domain; the sequence is PRKLPLQGLV…FLDLLERGRP (82 aa).

Belongs to the NAD-dependent DNA ligase family. LigA subfamily. Mg(2+) is required as a cofactor. Requires Mn(2+) as cofactor.

It carries out the reaction NAD(+) + (deoxyribonucleotide)n-3'-hydroxyl + 5'-phospho-(deoxyribonucleotide)m = (deoxyribonucleotide)n+m + AMP + beta-nicotinamide D-nucleotide.. DNA ligase that catalyzes the formation of phosphodiester linkages between 5'-phosphoryl and 3'-hydroxyl groups in double-stranded DNA using NAD as a coenzyme and as the energy source for the reaction. It is essential for DNA replication and repair of damaged DNA. This Methylococcus capsulatus (strain ATCC 33009 / NCIMB 11132 / Bath) protein is DNA ligase.